The primary structure comprises 689 residues: Methionine--tRNA ligase (689 aa).

A 'HIGH' region motif is present at residues 15–25 (PYANGPVHIGH). 4 residues coordinate Zn(2+): cysteine 147, cysteine 150, cysteine 160, and cysteine 163. The short motif at 342 to 346 (KISTS) is the 'KMSKS' region element. Threonine 345 serves as a coordination point for ATP. One can recognise a tRNA-binding domain in the interval 588–689 (DFAKMDIRVA…AVVNAGSMIG (102 aa)).

This sequence belongs to the class-I aminoacyl-tRNA synthetase family. MetG type 1 subfamily. As to quaternary structure, homodimer. Zn(2+) serves as cofactor.

The protein localises to the cytoplasm. It carries out the reaction tRNA(Met) + L-methionine + ATP = L-methionyl-tRNA(Met) + AMP + diphosphate. Functionally, is required not only for elongation of protein synthesis but also for the initiation of all mRNA translation through initiator tRNA(fMet) aminoacylation. This chain is Methionine--tRNA ligase, found in Cytophaga hutchinsonii (strain ATCC 33406 / DSM 1761 / CIP 103989 / NBRC 15051 / NCIMB 9469 / D465).